The primary structure comprises 948 residues: Protocadherin alpha-2 (948 aa).

Residues Met-1–Ala-22 form the signal peptide. Residues Ala-23–Asn-697 are Extracellular-facing. Cadherin domains follow at residues Gln-30–Phe-133, Ala-157–Phe-242, Ala-243–Val-350, Ser-351–Phe-455, Ala-456–Leu-565, and Gly-588–Ala-678. N-linked (GlcNAc...) asparagine glycans are attached at residues Asn-257, Asn-265, Asn-362, and Asn-548. The helical transmembrane segment at Val-698 to Tyr-718 threads the bilayer. Residues Thr-719–Gln-948 are Cytoplasmic-facing. One copy of the PXXP 1 repeat lies at Pro-734–Pro-737. The tract at residues Pro-734 to Pro-892 is 5 X 4 AA repeats of P-X-X-P. 3 disordered regions span residues Arg-754–Asn-801, Gly-829–Pro-854, and Lys-868–Gln-948. Residues Ala-783 to Gly-795 are compositionally biased toward basic and acidic residues. PXXP repeat units lie at residues Pro-797–Pro-800, Pro-830–Pro-833, Pro-871–Pro-874, and Pro-889–Pro-892. The segment covering Asp-907–Lys-921 has biased composition (basic and acidic residues).

The protein resides in the cell membrane. Its function is as follows. Potential calcium-dependent cell-adhesion protein. May be involved in the establishment and maintenance of specific neuronal connections in the brain. The sequence is that of Protocadherin alpha-2 (PCDHA2) from Homo sapiens (Human).